The sequence spans 177 residues: Thioredoxin M-type, chloroplastic (177 aa).

Residues 1–64 (MAAFTCTSSP…SRLRRGGIIC (64 aa)) constitute a chloroplast transit peptide. Residues 65–177 (EAQDTATGIP…LATSIDKFLQ (113 aa)) enclose the Thioredoxin domain. Catalysis depends on nucleophile residues Cys-101 and Cys-104. An intrachain disulfide couples Cys-101 to Cys-104.

The protein belongs to the thioredoxin family. Plant M-type subfamily. Forms a complex with heterodimeric ferredoxin-thioredoxin reductase (FTR) and ferredoxin.

The protein localises to the plastid. It is found in the chloroplast. Functionally, participates in various redox reactions through the reversible oxidation of the active center dithiol to a disulfide. The M form is known to activate NADP-malate dehydrogenase. This Brassica napus (Rape) protein is Thioredoxin M-type, chloroplastic.